Reading from the N-terminus, the 174-residue chain is MIAEVAAGGALGLALSVLHEAVKRAKDRSVTTRFILHRLEATIDSITPLVVQIDKFSEEMEDSTSRKVNKRLKLLLENAVSLVEENAELRRRNVRKKFRYMRDIKEFEAKLRWVVDVDVQVNQLADIKELKAKMSEISTKLDKIMPQPKFEIHIGWCSGKTNRAIRFTFCSDDS.

The 153-residue stretch at 1 to 153 folds into the RPW8 domain; it reads MIAEVAAGGA…IMPQPKFEIH (153 aa). The helical transmembrane segment at 7–23 threads the bilayer; it reads AGGALGLALSVLHEAVK. Residues 68–145 are a coiled coil; sequence VNKRLKLLLE…EISTKLDKIM (78 aa).

Belongs to the plant RPW8 protein family.

The protein localises to the membrane. Its function is as follows. Disease resistance (R) protein that induces localized, salicylic acid-dependent defenses. Confers resistance to powdery mildew (e.g. Erysiphe cichoracearum UCSC1). This Arabidopsis thaliana (Mouse-ear cress) protein is Protein RESISTANCE TO POWDERY MILDEW 8.2.